The sequence spans 467 residues: UDP-N-acetylmuramate--L-alanine ligase (467 aa).

Residue 114–120 coordinates ATP; sequence GTHGKTT.

The protein belongs to the MurCDEF family.

It is found in the cytoplasm. It carries out the reaction UDP-N-acetyl-alpha-D-muramate + L-alanine + ATP = UDP-N-acetyl-alpha-D-muramoyl-L-alanine + ADP + phosphate + H(+). It participates in cell wall biogenesis; peptidoglycan biosynthesis. In terms of biological role, cell wall formation. The polypeptide is UDP-N-acetylmuramate--L-alanine ligase (Rhodopseudomonas palustris (strain ATCC BAA-98 / CGA009)).